Reading from the N-terminus, the 618-residue chain is Chaperone protein dnaK (618 aa).

Positions Ser-595–Lys-618 are disordered.

This sequence belongs to the heat shock protein 70 family.

The protein resides in the plastid. It localises to the cyanelle. In terms of biological role, acts as a chaperone. This chain is Chaperone protein dnaK (dnaK-A), found in Cyanophora paradoxa.